The sequence spans 216 residues: MSQGQSKKLDVTVEQLRSIYHQFHDILEEKTDLHLPKKEYDDDAVRREVQIQLQEFLLSAMTMASKSLEVVNADTVGKTVKQLIMESQEKYMEPFDLDLNEQVRKMYQEWEDETVKVAQLRQTGPAKINEVYNNSKDEYLAQLDGRIGVLQARMMQQQSADHDDSTDDADDHINWEHIKQDYVASLNELYQTQQDLPKVRYNVEKVKRLMDFLEED.

At S2 the chain carries N-acetylserine.

In terms of assembly, component of the MIND kinetochore complex, which is composed of at least MTW1, NNF1, NSL1 and DSN1. Interacts with DSN1.

It is found in the nucleus. The protein resides in the chromosome. Its subcellular location is the centromere. The protein localises to the kinetochore. Acts as an essential component of the kinetochore MIND complex, which is required for the spindle checkpoint and kinetochore integrity. MIND plays a role in establishing a bipolar spindle-kinetochore interaction by joining kinetochore subunits contacting DNA to those contacting microtubules. NSL1 facilitates the attachment of two of the DASH complex components, DAD2 and SPC19, to the kinetochore in a microtubule-dependent manner. The protein is Kinetochore-associated protein NSL1 (NSL1) of Saccharomyces cerevisiae (strain ATCC 204508 / S288c) (Baker's yeast).